The chain runs to 478 residues: Zinc metalloproteinase/disintegrin ussurin (478 aa).

A signal peptide spans 1 to 20; it reads MIQVLLVTICLAAFPYQGSS. Residues 21-190 constitute a propeptide that is removed on maturation; it reads IILESGNVND…KKASPLVVTT (170 aa). One can recognise a Peptidase M12B domain in the interval 193-389; sequence RYVELVVVAD…RNPQCILNKP (197 aa). 2 residues coordinate Ca(2+): Glu196 and Asp280. 3 disulfides stabilise this stretch: Cys304/Cys384, Cys344/Cys368, and Cys346/Cys351. Residue His329 coordinates Zn(2+). Glu330 is a catalytic residue. Residues His333 and His339 each contribute to the Zn(2+) site. Residues Cys384 and Asn387 each coordinate Ca(2+). Positions 390-413 are excised as a propeptide; sequence LRTDIVSTPVSGNELLEAGEECDC. A Disintegrin domain is found at 397–478; the sequence is TPVSGNELLE…AGCPRNPFHA (82 aa). 6 disulfides stabilise this stretch: Cys411-Cys426, Cys413-Cys421, Cys420-Cys443, Cys434-Cys440, Cys439-Cys464, and Cys452-Cys471. The Cell attachment site signature appears at 456 to 458; that stretch reads RGD.

It belongs to the venom metalloproteinase (M12B) family. P-II subfamily. P-IIa sub-subfamily. In terms of assembly, monomer. Zn(2+) is required as a cofactor. Expressed by the venom gland.

The protein resides in the secreted. Impairs hemostasis in the envenomed animal. Functionally, inhibits platelet aggregation induced by ADP, thrombin, platelet-activating factor and collagen. Acts by inhibiting fibrinogen interaction with platelet receptors GPIIb/GPIIIa (ITGA2B/ITGB3). The sequence is that of Zinc metalloproteinase/disintegrin ussurin from Gloydius ussuriensis (Ussuri mamushi).